Here is a 204-residue protein sequence, read N- to C-terminus: Thiamine-phosphate synthase (204 aa).

4-amino-2-methyl-5-(diphosphooxymethyl)pyrimidine contacts are provided by residues Gln-32–Lys-36 and Asp-64. Residues Asp-65 and Asp-84 each coordinate Mg(2+). Thr-103 lines the 4-amino-2-methyl-5-(diphosphooxymethyl)pyrimidine pocket. A 2-[(2R,5Z)-2-carboxy-4-methylthiazol-5(2H)-ylidene]ethyl phosphate-binding site is contributed by Thr-129–Thr-131. Lys-132 contacts 4-amino-2-methyl-5-(diphosphooxymethyl)pyrimidine. Gly-165 provides a ligand contact to 2-[(2R,5Z)-2-carboxy-4-methylthiazol-5(2H)-ylidene]ethyl phosphate.

It belongs to the thiamine-phosphate synthase family. Requires Mg(2+) as cofactor.

The enzyme catalyses 2-[(2R,5Z)-2-carboxy-4-methylthiazol-5(2H)-ylidene]ethyl phosphate + 4-amino-2-methyl-5-(diphosphooxymethyl)pyrimidine + 2 H(+) = thiamine phosphate + CO2 + diphosphate. It catalyses the reaction 2-(2-carboxy-4-methylthiazol-5-yl)ethyl phosphate + 4-amino-2-methyl-5-(diphosphooxymethyl)pyrimidine + 2 H(+) = thiamine phosphate + CO2 + diphosphate. The catalysed reaction is 4-methyl-5-(2-phosphooxyethyl)-thiazole + 4-amino-2-methyl-5-(diphosphooxymethyl)pyrimidine + H(+) = thiamine phosphate + diphosphate. The protein operates within cofactor biosynthesis; thiamine diphosphate biosynthesis; thiamine phosphate from 4-amino-2-methyl-5-diphosphomethylpyrimidine and 4-methyl-5-(2-phosphoethyl)-thiazole: step 1/1. In terms of biological role, condenses 4-methyl-5-(beta-hydroxyethyl)thiazole monophosphate (THZ-P) and 2-methyl-4-amino-5-hydroxymethyl pyrimidine pyrophosphate (HMP-PP) to form thiamine monophosphate (TMP). In Bacteroides fragilis (strain ATCC 25285 / DSM 2151 / CCUG 4856 / JCM 11019 / LMG 10263 / NCTC 9343 / Onslow / VPI 2553 / EN-2), this protein is Thiamine-phosphate synthase.